A 135-amino-acid chain; its full sequence is Cytochrome b-c1 complex subunit 6, mitochondrial (135 aa).

Residues 1–70 (MSFFRDLLES…ETADPLDTLR (70 aa)) form a disordered region. The span at 19-64 (EPVEDVEVEQPEDAPEEEVSEETVEEEEDDDEDDDEDDEEEEETAD) shows a compositional bias: acidic residues.

This sequence belongs to the UQCRH/QCR6 family. Component of the ubiquinol-cytochrome c oxidoreductase (cytochrome b-c1 complex, complex III, CIII), a multisubunit enzyme composed of 10 subunits. The complex is composed of 3 respiratory subunits cytochrome b (COB), cytochrome c1 (CYT1) and Rieske protein (RIP1), 2 core protein subunits COR1 and QCR2, and 5 low-molecular weight protein subunits QCR6, QCR7, QCR8, QCR9 and QCR10. The complex exists as an obligatory dimer and forms supercomplexes (SCs) in the inner mitochondrial membrane with a monomer or a dimer of cytochrome c oxidase (complex IV, CIV), resulting in 2 different assemblies (supercomplexes III(2)IV and III(2)IV(2)).

It is found in the mitochondrion inner membrane. In terms of biological role, component of the ubiquinol-cytochrome c oxidoreductase, a multisubunit transmembrane complex that is part of the mitochondrial electron transport chain which drives oxidative phosphorylation. The complex plays an important role in the uptake of multiple carbon sources present in different host niches. This chain is Cytochrome b-c1 complex subunit 6, mitochondrial, found in Candida albicans (strain SC5314 / ATCC MYA-2876) (Yeast).